The sequence spans 1072 residues: DNA-directed RNA polymerase subunit beta (1072 aa).

It belongs to the RNA polymerase beta chain family. As to quaternary structure, in plastids the minimal PEP RNA polymerase catalytic core is composed of four subunits: alpha, beta, beta', and beta''. When a (nuclear-encoded) sigma factor is associated with the core the holoenzyme is formed, which can initiate transcription.

It localises to the plastid. The protein localises to the chloroplast. The enzyme catalyses RNA(n) + a ribonucleoside 5'-triphosphate = RNA(n+1) + diphosphate. In terms of biological role, DNA-dependent RNA polymerase catalyzes the transcription of DNA into RNA using the four ribonucleoside triphosphates as substrates. The polypeptide is DNA-directed RNA polymerase subunit beta (Crucihimalaya wallichii (Rock-cress)).